The chain runs to 699 residues: Mannan-binding lectin serine protease 1 (699 aa).

A signal peptide spans 1–19 (MRWLLLYYALCFSLSKASA). In terms of domain architecture, CUB 1 spans 20 to 138 (HTVELNNMFG…TGFDAHYMAV (119 aa)). Residues 20 to 184 (HTVELNNMFG…HTDNRTCRVE (165 aa)) form a homodimerization region. The segment at 20–184 (HTVELNNMFG…HTDNRTCRVE (165 aa)) is interaction with MBL2. The tract at residues 20-278 (HTVELNNMFG…STQSHSVLIL (259 aa)) is interaction with FCN2. N-linked (GlcNAc...) asparagine glycosylation occurs at Asn49. Glu68, Asp76, Asp121, Ser123, Asp139, Val140, and Glu142 together coordinate Ca(2+). Cys73 and Cys91 are disulfide-bonded. The region spanning 139–182 (DVDECKEREDEELSCDHYCHNYIGGYYCSCRFGYILHTDNRTCR) is the EGF-like; calcium-binding domain. Cystine bridges form between Cys143–Cys157, Cys153–Cys166, Cys168–Cys181, and Cys185–Cys212. Asn159, Tyr160, and Gly163 together coordinate Ca(2+). Asn159 is subject to (3R)-3-hydroxyasparagine. Asn178 carries N-linked (GlcNAc...) (complex) asparagine glycosylation. A CUB 2 domain is found at 185–297 (CSDNLFTQRT…RGWRLSYRAA (113 aa)). Ca(2+) contacts are provided by Glu235, Asp245, Asp282, and Ser284. An intrachain disulfide couples Cys242 to Cys260. 2 consecutive Sushi domains span residues 299–364 (NECP…TCKI) and 365–434 (VDCR…TCLP). 6 disulfides stabilise this stretch: Cys301–Cys349, Cys329–Cys362, Cys367–Cys414, Cys397–Cys432, Cys436–Cys572, and Cys475–Cys491. An N-linked (GlcNAc...) (complex) asparagine glycan is attached at Asn385. Residue Asn407 is glycosylated (N-linked (GlcNAc...) asparagine). The Peptidase S1 domain occupies 449-696 (IFNGRPAQKG…NKDWIQRVTG (248 aa)). The Charge relay system role is filled by His490. N-linked (GlcNAc) asparagine glycosylation occurs at Leu533. Residue Asp552 is the Charge relay system of the active site. N-linked (GlcNAc) asparagine glycosylation is present at Glu599. Disulfide bonds link Cys614/Cys631 and Cys642/Cys672. Ser646 (charge relay system) is an active-site residue.

This sequence belongs to the peptidase S1 family. As to quaternary structure, homodimer. Interacts with the oligomeric lectins MBL2, FCN2 and FCN3; triggers the lectin pathway of complement through activation of C3. Interacts with SERPING1. Interacts with COLEC11; probably triggers the lectin pathway of complement. Post-translationally, the iron and 2-oxoglutarate dependent 3-hydroxylation of aspartate and asparagine is (R) stereospecific within EGF domains. In terms of processing, N-glycosylated. Some N-linked glycan are of the complex-type. Autoproteolytic processing of the proenzyme produces the active enzyme composed on the heavy and the light chain held together by a disulfide bond. Isoform 1 but not isoform 2 is activated through autoproteolytic processing. Protein of the plasma which is primarily expressed by liver.

The protein resides in the secreted. Inhibited by SERPING1 and A2M. In terms of biological role, functions in the lectin pathway of complement, which performs a key role in innate immunity by recognizing pathogens through patterns of sugar moieties and neutralizing them. The lectin pathway is triggered upon binding of mannan-binding lectin (MBL) and ficolins to sugar moieties which leads to activation of the associated proteases MASP1 and MASP2. Functions as an endopeptidase and may activate MASP2 or C2 or directly activate C3 the key component of complement reaction. Isoform 2 may have an inhibitory effect on the activation of the lectin pathway of complement or may cleave IGFBP5. Also plays a role in development. This is Mannan-binding lectin serine protease 1 (MASP1) from Homo sapiens (Human).